The following is a 530-amino-acid chain: MARLFTPSESKYYLMALDAGTGSIRAVIFDLEGNQIAVGQAEWRHLAVPDVPGSMEFDLNKNWQLACECMRQALHNAGIAPEYIAAVSACSMREGIVLYNNEGTPIWACANVDARAAREVSELKELHNNTFENEVYRATGQTLALSAIPRLLWLAHHRSDIYRQASTITMISDWLAYMLSGELAVDPSNAGTTGLLDLTTRDWKPALLDMAGLRADILSPVKETGTLLGVVSSQAAELCGLKAGTPVVVGGGDVQLGCLGLGVVRPAQTAVLGGTFWQQVVNLAAPVTDPEMNVRVNPHVIPGMVQAESISFFTGLTMRWFRDAFCAEEKLIAERLGIDTYTLLEEMTSRVPPGSWGVMPIFSDRMRFKTWYHAAPSFINLSIDPDKCNKATLFRALEENAAIVSACNLQQIADFSNIHPSSLVFAGGGSKGKLWSQILADVSGLPVNIPVVKEATALGCAIAAGVGAGIFSSMAETGERLVRWERTHTPAPEKHELYQDSRDKWQAVYQDQLGLVDHGLTTSLWKAPGL.

It belongs to the FGGY kinase family.

The protein resides in the cytoplasm. It carries out the reaction (S)-4,5-dihydroxypentane-2,3-dione + ATP = (2S)-2-hydroxy-3,4-dioxopentyl phosphate + ADP + H(+). Catalyzes the phosphorylation of autoinducer-2 (AI-2) to phospho-AI-2, which subsequently inactivates the transcriptional regulator LsrR and leads to the transcription of the lsr operon. Phosphorylates the ring-open form of (S)-4,5-dihydroxypentane-2,3-dione (DPD), which is the precursor to all AI-2 signaling molecules, at the C5 position. The sequence is that of Autoinducer-2 kinase from Escherichia coli O9:H4 (strain HS).